Reading from the N-terminus, the 955-residue chain is 2-oxoglutarate dehydrogenase E1 component (955 aa).

The protein belongs to the alpha-ketoglutarate dehydrogenase family. Homodimer. Part of the 2-oxoglutarate dehydrogenase (OGDH) complex composed of E1 (2-oxoglutarate dehydrogenase), E2 (dihydrolipoamide succinyltransferase) and E3 (dihydrolipoamide dehydrogenase); the complex contains multiple copies of the three enzymatic components (E1, E2 and E3). The cofactor is thiamine diphosphate.

It carries out the reaction N(6)-[(R)-lipoyl]-L-lysyl-[protein] + 2-oxoglutarate + H(+) = N(6)-[(R)-S(8)-succinyldihydrolipoyl]-L-lysyl-[protein] + CO2. Functionally, E1 component of the 2-oxoglutarate dehydrogenase (OGDH) complex which catalyzes the decarboxylation of 2-oxoglutarate, the first step in the conversion of 2-oxoglutarate to succinyl-CoA and CO(2). The protein is 2-oxoglutarate dehydrogenase E1 component of Bacillus cereus (strain AH187).